A 692-amino-acid polypeptide reads, in one-letter code: Phenoloxidase subunit 2 (692 aa).

A propeptide spanning residues 1-97 is cleaved from the precursor; it reads MTDRVKSLQL…PRHQEMATEV (97 aa). His213, His217, and His243 together coordinate Cu cation. Residues Asn256, Asn295, and Asn309 are each glycosylated (N-linked (GlcNAc...) asparagine). Glu351 acts as the Proton acceptor in catalysis. His366, His370, and His406 together coordinate Cu cation. N-linked (GlcNAc...) asparagine glycosylation occurs at Asn494. 2 disulfide bridges follow: Cys583–Cys628 and Cys585–Cys635.

It belongs to the tyrosinase family. In terms of assembly, heterodimer. Cu(2+) serves as cofactor.

Its subcellular location is the secreted. It catalyses the reaction L-tyrosine + O2 = L-dopaquinone + H2O. It carries out the reaction 2 L-dopa + O2 = 2 L-dopaquinone + 2 H2O. Its function is as follows. Copper-containing oxidase that functions in the formation of pigments such as melanins and other polyphenolic compounds. Catalyzes the rate-limiting conversions of tyrosine to DOPA, DOPA to DOPA-quinone and possibly 5,6 dihydroxyindole to indole-5'6 quinone. Binds to the surface of hemocytes and is involved in hemocyte melanization. Binds the A.niger cell wall component alpha-1,3-glucan, a fungal pathogen-associated molecular pattern (PAMP) that activates the host immune response. The chain is Phenoloxidase subunit 2 from Galleria mellonella (Greater wax moth).